Here is a 441-residue protein sequence, read N- to C-terminus: Ribosomal protein uS12 methylthiotransferase RimO (441 aa).

Positions 8-118 constitute an MTTase N-terminal domain; it reads PKIGFVSLGC…VLQHVHHYVP (111 aa). Residues Cys-17, Cys-53, Cys-82, Cys-150, Cys-154, and Cys-157 each contribute to the [4Fe-4S] cluster site. A Radical SAM core domain is found at 136-373; it reads LTPRHYAYLK…MQLQQQISAE (238 aa). In terms of domain architecture, TRAM spans 376–441; that stretch reads QEKVGREILV…DEYDLWGSRV (66 aa).

This sequence belongs to the methylthiotransferase family. RimO subfamily. [4Fe-4S] cluster is required as a cofactor.

It is found in the cytoplasm. It carries out the reaction L-aspartate(89)-[ribosomal protein uS12]-hydrogen + (sulfur carrier)-SH + AH2 + 2 S-adenosyl-L-methionine = 3-methylsulfanyl-L-aspartate(89)-[ribosomal protein uS12]-hydrogen + (sulfur carrier)-H + 5'-deoxyadenosine + L-methionine + A + S-adenosyl-L-homocysteine + 2 H(+). Catalyzes the methylthiolation of an aspartic acid residue of ribosomal protein uS12. In Salmonella paratyphi A (strain ATCC 9150 / SARB42), this protein is Ribosomal protein uS12 methylthiotransferase RimO.